The chain runs to 121 residues: Large ribosomal subunit protein bL12 (121 aa).

The protein belongs to the bacterial ribosomal protein bL12 family. Homodimer. Part of the ribosomal stalk of the 50S ribosomal subunit. Forms a multimeric L10(L12)X complex, where L10 forms an elongated spine to which 2 to 4 L12 dimers bind in a sequential fashion. Binds GTP-bound translation factors.

In terms of biological role, forms part of the ribosomal stalk which helps the ribosome interact with GTP-bound translation factors. Is thus essential for accurate translation. The chain is Large ribosomal subunit protein bL12 from Psychromonas ingrahamii (strain DSM 17664 / CCUG 51855 / 37).